Reading from the N-terminus, the 473-residue chain is Ribulose bisphosphate carboxylase large chain 1 (473 aa).

2 residues coordinate substrate: N116 and T166. K168 (proton acceptor) is an active-site residue. Position 170 (K170) interacts with substrate. 3 residues coordinate Mg(2+): K194, D196, and E197. N6-carboxylysine is present on K194. H287 serves as the catalytic Proton acceptor. Substrate contacts are provided by R288, H320, and S372.

Belongs to the RuBisCO large chain family. Type I subfamily. In terms of assembly, heterohexadecamer of 8 large chains and 8 small chains. It depends on Mg(2+) as a cofactor.

It carries out the reaction 2 (2R)-3-phosphoglycerate + 2 H(+) = D-ribulose 1,5-bisphosphate + CO2 + H2O. The catalysed reaction is D-ribulose 1,5-bisphosphate + O2 = 2-phosphoglycolate + (2R)-3-phosphoglycerate + 2 H(+). RuBisCO catalyzes two reactions: the carboxylation of D-ribulose 1,5-bisphosphate, the primary event in carbon dioxide fixation, as well as the oxidative fragmentation of the pentose substrate. Both reactions occur simultaneously and in competition at the same active site. The protein is Ribulose bisphosphate carboxylase large chain 1 of Nitrobacter winogradskyi (strain ATCC 25391 / DSM 10237 / CIP 104748 / NCIMB 11846 / Nb-255).